We begin with the raw amino-acid sequence, 371 residues long: Putative 26S proteasome regulatory subunit homolog MJ1494 (371 aa).

Residue 161 to 168 (GPPGTGKT) coordinates ATP.

This sequence belongs to the AAA ATPase family.

The 26S proteasome is involved in the ATP-dependent degradation of ubiquitinated proteins. The regulatory (or ATPase) complex confers ATP dependency and substrate specificity to the 26S complex. In Methanocaldococcus jannaschii (strain ATCC 43067 / DSM 2661 / JAL-1 / JCM 10045 / NBRC 100440) (Methanococcus jannaschii), this protein is Putative 26S proteasome regulatory subunit homolog MJ1494.